The primary structure comprises 189 residues: UPF0301 protein RP032 (189 aa).

This sequence belongs to the UPF0301 (AlgH) family.

The polypeptide is UPF0301 protein RP032 (Rickettsia prowazekii (strain Madrid E)).